The following is a 257-amino-acid chain: MLARRIIPCLDVKDGVVVKGIQFRNHEVMGDIVPLAKRYADEGADELVFYDITASSDARVVDKSWVSRVAEVIDIPFCVAGGIKSVEDAKRILEFGADKVSINSPALENPALITELADRFGVQCIVVGIDSYFDAATGQYQVKQYTGDENRTRITKWTTPDWVVEVQKRGAGEIVLNMMNQDGVRQGYDLTQLKLIRDLCKVPLIASGGAGEMVHFRDAFQIADVDGALAASVFHKGIIPIPELKAYLRNEGVQIRD.

Active-site residues include D11 and D130.

Belongs to the HisA/HisF family. As to quaternary structure, heterodimer of HisH and HisF.

The protein resides in the cytoplasm. It catalyses the reaction 5-[(5-phospho-1-deoxy-D-ribulos-1-ylimino)methylamino]-1-(5-phospho-beta-D-ribosyl)imidazole-4-carboxamide + L-glutamine = D-erythro-1-(imidazol-4-yl)glycerol 3-phosphate + 5-amino-1-(5-phospho-beta-D-ribosyl)imidazole-4-carboxamide + L-glutamate + H(+). It functions in the pathway amino-acid biosynthesis; L-histidine biosynthesis; L-histidine from 5-phospho-alpha-D-ribose 1-diphosphate: step 5/9. In terms of biological role, IGPS catalyzes the conversion of PRFAR and glutamine to IGP, AICAR and glutamate. The HisF subunit catalyzes the cyclization activity that produces IGP and AICAR from PRFAR using the ammonia provided by the HisH subunit. The chain is Imidazole glycerol phosphate synthase subunit HisF from Tolumonas auensis (strain DSM 9187 / NBRC 110442 / TA 4).